Here is a 549-residue protein sequence, read N- to C-terminus: Manganese transporter SMF2 (549 aa).

The segment at 1–23 (MTSQEYEPIQWSDESQTNNDSVN) is disordered. Residues 12-22 (SDESQTNNDSV) show a composition bias toward polar residues. 8 helical membrane-spanning segments follow: residues 91–109 (LLFS…QYLC), 130–147 (FGLN…IIAT), 161–185 (ILFH…LLAY), 196–214 (IFEA…CFTV), 312–332 (LLIS…IVSG), 350–372 (IYNL…ALLF), 432–452 (ASQV…LYFT), and 521–541 (VLAI…LLGF).

This sequence belongs to the NRAMP family.

The protein localises to the vacuole lumen. The protein resides in the vesicle. Its subcellular location is the cell membrane. It catalyses the reaction Mn(2+)(in) = Mn(2+)(out). In terms of biological role, high-affinity manganese transporter involved in manganese uptake from the extracellular environment. In Saccharomyces cerevisiae (strain ATCC 204508 / S288c) (Baker's yeast), this protein is Manganese transporter SMF2 (SMF2).